The chain runs to 152 residues: uncharacterized protein (152 aa).

The protein resides in the mitochondrion. This is an uncharacterized protein from Arabidopsis thaliana (Mouse-ear cress).